Here is a 371-residue protein sequence, read N- to C-terminus: Barbiturase 1 (371 aa).

Residues Met1–Asp103 are RU A. Substrate is bound by residues Arg53 and Ser82–Gly83. Residues Arg115–Pro250 form an RU B region. Residue Lys165 is part of the active site. Substrate-binding positions include Asn197 and Ser233–Ser234. The active-site Nucleophile is Ser233. The segment at Tyr256–Gly371 is RU C. Mg(2+) is bound at residue Glu304. Substrate contacts are provided by residues Lys331 and Ser350 to Val351. Mg(2+)-binding residues include Ala353, Gln356, Gly357, Pro358, and Gly361.

The protein belongs to the cyclic amide hydrolase (CyAH) family. Homotetramer.

The enzyme catalyses barbiturate + H2O = 3-oxo-3-ureidopropanoate. Its pathway is pyrimidine metabolism; uracil degradation via oxidative pathway; malonate and urea from uracil: step 2/3. With respect to regulation, inhibited by cyanuric acid. Responsible for the hydrolysis of barbituric acid (2,4,6-trihydroxy-1,3-pyrimidine), an intermediate in the oxidative catabolism of pyrimidines. Catalyzes the hydrolytic opening of the pyrimidine ring of barbituric acid to yield ureidomalonic acid. In Nocardioides sp. (strain ATCC BAA-499 / JS614), this protein is Barbiturase 1.